The sequence spans 101 residues: Acylphosphatase-1 (101 aa).

Serine 2 is subject to N-acetylserine. The residue at position 2 (serine 2) is an N-acetylalanine. The region spanning 11-101 (SVDYEIFGKV…LDYTDFQIVK (91 aa)) is the Acylphosphatase-like domain. Active-site residues include arginine 26 and asparagine 44.

It belongs to the acylphosphatase family. Organ-common type isozyme is found in many different tissues.

The catalysed reaction is an acyl phosphate + H2O = a carboxylate + phosphate + H(+). The protein is Acylphosphatase-1 (ACYP1) of Bos taurus (Bovine).